Reading from the N-terminus, the 250-residue chain is 5-oxoprolinase subunit A (250 aa).

The protein belongs to the LamB/PxpA family. In terms of assembly, forms a complex composed of PxpA, PxpB and PxpC.

The catalysed reaction is 5-oxo-L-proline + ATP + 2 H2O = L-glutamate + ADP + phosphate + H(+). Its function is as follows. Catalyzes the cleavage of 5-oxoproline to form L-glutamate coupled to the hydrolysis of ATP to ADP and inorganic phosphate. This Staphylococcus aureus (strain MRSA252) protein is 5-oxoprolinase subunit A.